Consider the following 127-residue polypeptide: F420-non-reducing hydrogenase subunit G (127 aa).

This sequence belongs to the [NiFe]/[NiFeSe] hydrogenase small subunit family. As to quaternary structure, the F420-non-reducing hydrogenase is composed of three subunits; MvhA, MvhD and MvhG. It forms a complex with the heterodisulfide reductase (hdr).

Part of a complex that provides reducing equivalents for heterodisulfide reductase. This Methanothermus fervidus protein is F420-non-reducing hydrogenase subunit G (mvhG).